The primary structure comprises 334 residues: Ornithine carbamoyltransferase (334 aa).

Carbamoyl phosphate is bound by residues 57 to 60 (STRT), glutamine 84, arginine 108, and 135 to 138 (HPTQ). L-ornithine-binding positions include asparagine 169, aspartate 233, and 237–238 (SM). Residues 275–276 (CL) and arginine 320 each bind carbamoyl phosphate.

The protein belongs to the aspartate/ornithine carbamoyltransferase superfamily. OTCase family.

The protein resides in the cytoplasm. The enzyme catalyses carbamoyl phosphate + L-ornithine = L-citrulline + phosphate + H(+). The protein operates within amino-acid biosynthesis; L-arginine biosynthesis; L-arginine from L-ornithine and carbamoyl phosphate: step 1/3. Reversibly catalyzes the transfer of the carbamoyl group from carbamoyl phosphate (CP) to the N(epsilon) atom of ornithine (ORN) to produce L-citrulline. This is Ornithine carbamoyltransferase from Aeromonas salmonicida (strain A449).